The chain runs to 520 residues: Transactivator/viroplasmin protein (520 aa).

Residues 486-520 (VQDASADSGPKDGPPPTRSIVEKEDVPTTSSKQVD) form a disordered region.

Belongs to the caulimoviridae viroplasmin family.

It localises to the host cytoplasm. Enhances the ribosomal termination-reinitiation event leading to the translation of major open reading frames on the polycistronic viral RNAs. The polypeptide is Transactivator/viroplasmin protein (Cauliflower mosaic virus (strain NY8153) (CaMV)).